Consider the following 32-residue polypeptide: Conotoxin pr6d (32 aa).

4-hydroxyproline is present on Pro5. 3 cysteine pairs are disulfide-bonded: Cys7-Cys20, Cys14-Cys25, and Cys19-Cys30.

In terms of tissue distribution, expressed by the venom duct.

The protein localises to the secreted. The sequence is that of Conotoxin pr6d from Conus parius (Cone snail).